The sequence spans 284 residues: Pantothenate synthetase (284 aa).

30–37 provides a ligand contact to ATP; sequence MGALHNGH. The active-site Proton donor is H37. Residue Q61 participates in (R)-pantoate binding. Q61 contributes to the beta-alanine binding site. ATP is bound at residue 147–150; sequence GEKD. Position 153 (Q153) interacts with (R)-pantoate. ATP-binding positions include L176 and 184-187; that span reads SSSR.

Belongs to the pantothenate synthetase family. As to quaternary structure, homodimer.

It localises to the cytoplasm. It catalyses the reaction (R)-pantoate + beta-alanine + ATP = (R)-pantothenate + AMP + diphosphate + H(+). It participates in cofactor biosynthesis; (R)-pantothenate biosynthesis; (R)-pantothenate from (R)-pantoate and beta-alanine: step 1/1. Its function is as follows. Catalyzes the condensation of pantoate with beta-alanine in an ATP-dependent reaction via a pantoyl-adenylate intermediate. The sequence is that of Pantothenate synthetase from Bartonella henselae (strain ATCC 49882 / DSM 28221 / CCUG 30454 / Houston 1) (Rochalimaea henselae).